The primary structure comprises 438 residues: Trigger factor (438 aa).

Residues 163-248 form the PPIase FKBP-type domain; the sequence is GEIAVLDFAA…VHAVKERKLP (86 aa).

This sequence belongs to the FKBP-type PPIase family. Tig subfamily.

It is found in the cytoplasm. It carries out the reaction [protein]-peptidylproline (omega=180) = [protein]-peptidylproline (omega=0). Its function is as follows. Involved in protein export. Acts as a chaperone by maintaining the newly synthesized protein in an open conformation. Functions as a peptidyl-prolyl cis-trans isomerase. This Oleidesulfovibrio alaskensis (strain ATCC BAA-1058 / DSM 17464 / G20) (Desulfovibrio alaskensis) protein is Trigger factor.